The primary structure comprises 628 residues: ATP-dependent zinc metalloprotease FtsH (628 aa).

Residues 1–7 lie on the Stromal side of the membrane; the sequence is MKLSWKT. The chain crosses the membrane as a helical span at residues 8–28; it reads LLLWSLPIFVVGFFFWQGFLG. The Lumenal portion of the chain corresponds to 29-118; it reads PTTTDVGSNI…AHPPKSTSAV (90 aa). The chain crosses the membrane as a helical span at residues 119-139; the sequence is WGLLGNLLFPLILVGGLAFLF. The Stromal portion of the chain corresponds to 140-628; the sequence is RRSNNASGGP…PEKNYYISQF (489 aa). 213–220 serves as a coordination point for ATP; sequence GPPGTGKT. Position 434 (H434) interacts with Zn(2+). E435 is a catalytic residue. Positions 438 and 512 each coordinate Zn(2+).

It in the central section; belongs to the AAA ATPase family. This sequence in the C-terminal section; belongs to the peptidase M41 family. As to quaternary structure, homohexamer. It depends on Zn(2+) as a cofactor.

The protein localises to the plastid. It localises to the chloroplast thylakoid membrane. In terms of biological role, acts as a processive, ATP-dependent zinc metallopeptidase. This is ATP-dependent zinc metalloprotease FtsH from Porphyra purpurea (Red seaweed).